A 649-amino-acid polypeptide reads, in one-letter code: Protein phosphatase Slingshot homolog 3 (649 aa).

Polar residues predominate over residues 1–20 (MALVTVSRSPPASGHSTPVG). A disordered region spans residues 1–32 (MALVTVSRSPPASGHSTPVGPTQDRVVRRRGR). A2 carries the post-translational modification N-acetylalanine. Residues S9 and S38 each carry the phosphoserine modification. The disordered stretch occupies residues 49-90 (LQDGGDSNVASEADSEPMEEPSGEEQPTEDQTDKGQGLQSPW). Positions 61-78 (ADSEPMEEPSGEEQPTED) are enriched in acidic residues. A Phosphoserine modification is found at S88. The DEK-C domain maps to 266 to 321 (EKMEQAILAELWQVLDTSDLDSVTSKEIRQALELRLGCPLQQYRDFIDNQMLLLMA). One can recognise a Tyrosine-protein phosphatase domain in the interval 325-466 (RASRIFPHLY…LRTYQGILTA (142 aa)). C410 functions as the Phosphocysteine intermediate in the catalytic mechanism. Low complexity-rich tracts occupy residues 541 to 551 (LEPSESESTPE) and 608 to 627 (TRAF…GMSS). Disordered regions lie at residues 541–586 (LEPS…KGPW) and 608–649 (TRAF…EDKA). The span at 639-649 (SVDDSREEDKA) shows a compositional bias: basic and acidic residues.

This sequence belongs to the protein-tyrosine phosphatase family. As to quaternary structure, does not bind to, or colocalize with, filamentous actin. As to expression, expressed in brain, small intestine and testis. Also expressed at lower levels in heart, kidney, liver, spleen and thymus.

It is found in the cytoplasm. The protein resides in the cytoskeleton. Its subcellular location is the nucleus. The enzyme catalyses O-phospho-L-tyrosyl-[protein] + H2O = L-tyrosyl-[protein] + phosphate. It catalyses the reaction O-phospho-L-seryl-[protein] + H2O = L-seryl-[protein] + phosphate. The catalysed reaction is O-phospho-L-threonyl-[protein] + H2O = L-threonyl-[protein] + phosphate. Functionally, protein phosphatase which may play a role in the regulation of actin filament dynamics. Can dephosphorylate and activate the actin binding/depolymerizing factor cofilin, which subsequently binds to actin filaments and stimulates their disassembly. This Mus musculus (Mouse) protein is Protein phosphatase Slingshot homolog 3 (Ssh3).